Here is a 36-residue protein sequence, read N- to C-terminus: Esculentin-2R (36 aa).

A disulfide bond links Cys-30 and Cys-36.

In terms of tissue distribution, expressed by the skin glands.

Its subcellular location is the secreted. In terms of biological role, antimicrobial peptide. The polypeptide is Esculentin-2R (Pelophylax ridibundus (Marsh frog)).